The following is a 508-amino-acid chain: MLO-like protein 3 (508 aa).

Residues 1 to 21 lie on the Extracellular side of the membrane; it reads MTDKEESNHSSEVGAVRSLQE. Residues 22–42 traverse the membrane as a helical segment; it reads TPTWALATVCFFFIAVSICLE. The Cytoplasmic segment spans residues 43–68; it reads RLINLLSTRLKKNRKTSLLEAVEKLK. A helical transmembrane segment spans residues 69–89; it reads SVLMVLGFMSLMLNVTEGEVS. Topologically, residues 90-153 are extracellular; it reads KICIPIKYAN…SEEGLTQLSY (64 aa). The helical transmembrane segment at 154-174 threads the bilayer; it reads FFFVLACMHILCNLAILLLGM. Residues 175 to 275 are Cytoplasmic-facing; the sequence is AKMRKWNSWE…IQRSLHEDFK (101 aa). Residues 276-296 traverse the membrane as a helical segment; sequence TVVGISPLMWLTVVIFMLLDV. At 297–304 the chain is on the extracellular side; sequence SGWRVYFY. A helical membrane pass occupies residues 305–325; it reads MSFVPLIIVLVIGTKLEMIVA. At 326-357 the chain is on the cytoplasmic side; the sequence is KMAVTIKENNSVIRGTPLVESNDTHFWFSNPR. Residues 358 to 378 traverse the membrane as a helical segment; the sequence is FLLSILHYTLFLNTFEMAFIV. The Extracellular segment spans residues 379-401; sequence WITWQFGINSCYHDNQGIIITRL. The chain crosses the membrane as a helical span at residues 402 to 422; the sequence is VLAVTVQFLSSYITLPLYAIV. At 423-508 the chain is on the cytoplasmic side; it reads TQMGSSYKRA…EIQIQEKTER (86 aa). The segment at 436 to 457 is calmodulin-binding; the sequence is EQLANVLRHWQGMVRDKKKTIQ. Positions 453-492 are disordered; it reads KKTIQTPDTDNNSNNNNGDIDSGESPVQTEVASEFRFSGR. Position 494 is a phosphoserine (serine 494).

It belongs to the MLO family.

It is found in the membrane. Functionally, may be involved in modulation of pathogen defense and leaf cell death. Activity seems to be regulated by Ca(2+)-dependent calmodulin binding and seems not to require heterotrimeric G proteins. This Arabidopsis thaliana (Mouse-ear cress) protein is MLO-like protein 3 (MLO3).